A 681-amino-acid polypeptide reads, in one-letter code: Potassium-transporting ATPase ATP-binding subunit (681 aa).

A run of 4 helical transmembrane segments spans residues 37–57 (MFVVEVGTFITLLATIFPTYF), 64–84 (VGYNALVTFILFVTVLFANFA), 218–238 (IALTTVLVSLTIIFIVVVMTL), and 255–275 (IALLVCLIPTTIGGLLSAIGI). The active-site 4-aspartylphosphate intermediate is the Asp-306. ATP-binding positions include Asp-343, Glu-347, 375-382 (FSAETRMS), and Lys-394. Residues Asp-517 and Asp-521 each coordinate Mg(2+). A run of 3 helical transmembrane segments spans residues 573–595 (ALTTFSIANDVAKYFAILPAIIS), 615–635 (AILSALIYNAIIIPILIPIAM), and 655–675 (IYGLGGLIAPFVGIKLIDMII).

This sequence belongs to the cation transport ATPase (P-type) (TC 3.A.3) family. Type IA subfamily. The system is composed of three essential subunits: KdpA, KdpB and KdpC.

Its subcellular location is the cell membrane. It carries out the reaction K(+)(out) + ATP + H2O = K(+)(in) + ADP + phosphate + H(+). Part of the high-affinity ATP-driven potassium transport (or Kdp) system, which catalyzes the hydrolysis of ATP coupled with the electrogenic transport of potassium into the cytoplasm. This subunit is responsible for energy coupling to the transport system and for the release of the potassium ions to the cytoplasm. The polypeptide is Potassium-transporting ATPase ATP-binding subunit (Caldanaerobacter subterraneus subsp. tengcongensis (strain DSM 15242 / JCM 11007 / NBRC 100824 / MB4) (Thermoanaerobacter tengcongensis)).